Here is a 342-residue protein sequence, read N- to C-terminus: Ketol-acid reductoisomerase (NADP(+)) (342 aa).

The KARI N-terminal Rossmann domain maps to 2 to 182 (AEMFYDDDAD…GGLRAGGIKT (181 aa)). NADP(+) is bound by residues 25–28 (FGSQ), Lys48, Ser51, Ser53, and 83–86 (DHLQ). His108 is an active-site residue. Gly134 contacts NADP(+). The 146-residue stretch at 183-328 (TFTEETETDL…RELRKLMAWV (146 aa)) folds into the KARI C-terminal knotted domain. Mg(2+) is bound by residues Asp191, Glu195, Glu227, and Glu231. Residue Ser252 participates in substrate binding.

It belongs to the ketol-acid reductoisomerase family. It depends on Mg(2+) as a cofactor.

It catalyses the reaction (2R)-2,3-dihydroxy-3-methylbutanoate + NADP(+) = (2S)-2-acetolactate + NADPH + H(+). It carries out the reaction (2R,3R)-2,3-dihydroxy-3-methylpentanoate + NADP(+) = (S)-2-ethyl-2-hydroxy-3-oxobutanoate + NADPH + H(+). The protein operates within amino-acid biosynthesis; L-isoleucine biosynthesis; L-isoleucine from 2-oxobutanoate: step 2/4. It functions in the pathway amino-acid biosynthesis; L-valine biosynthesis; L-valine from pyruvate: step 2/4. Involved in the biosynthesis of branched-chain amino acids (BCAA). Catalyzes an alkyl-migration followed by a ketol-acid reduction of (S)-2-acetolactate (S2AL) to yield (R)-2,3-dihydroxy-isovalerate. In the isomerase reaction, S2AL is rearranged via a Mg-dependent methyl migration to produce 3-hydroxy-3-methyl-2-ketobutyrate (HMKB). In the reductase reaction, this 2-ketoacid undergoes a metal-dependent reduction by NADPH to yield (R)-2,3-dihydroxy-isovalerate. This is Ketol-acid reductoisomerase (NADP(+)) from Kineococcus radiotolerans (strain ATCC BAA-149 / DSM 14245 / SRS30216).